Consider the following 324-residue polypeptide: tRNA dimethylallyltransferase (324 aa).

17-24 (GPTASGKT) lines the ATP pocket. Residue 19-24 (TASGKT) coordinates substrate. Interaction with substrate tRNA stretches follow at residues 42-45 (DSAL), 166-170 (QRIQR), and 251-256 (RCVGYR).

It belongs to the IPP transferase family. In terms of assembly, monomer. Requires Mg(2+) as cofactor.

The enzyme catalyses adenosine(37) in tRNA + dimethylallyl diphosphate = N(6)-dimethylallyladenosine(37) in tRNA + diphosphate. Catalyzes the transfer of a dimethylallyl group onto the adenine at position 37 in tRNAs that read codons beginning with uridine, leading to the formation of N6-(dimethylallyl)adenosine (i(6)A). The sequence is that of tRNA dimethylallyltransferase from Burkholderia pseudomallei (strain 1106a).